A 312-amino-acid polypeptide reads, in one-letter code: Ribonuclease Z (312 aa).

The Zn(2+) site is built by His-62, His-64, Asp-66, His-67, His-144, Asp-215, and His-273. Residue Asp-66 is the Proton acceptor of the active site.

It belongs to the RNase Z family. As to quaternary structure, homodimer. Zn(2+) is required as a cofactor.

It carries out the reaction Endonucleolytic cleavage of RNA, removing extra 3' nucleotides from tRNA precursor, generating 3' termini of tRNAs. A 3'-hydroxy group is left at the tRNA terminus and a 5'-phosphoryl group is left at the trailer molecule.. Functionally, zinc phosphodiesterase, which displays some tRNA 3'-processing endonuclease activity. Probably involved in tRNA maturation, by removing a 3'-trailer from precursor tRNA. The sequence is that of Ribonuclease Z from Prochlorococcus marinus (strain MIT 9312).